The following is a 37-amino-acid chain: Esculentin-2B (37 aa).

Cys-31 and Cys-37 are joined by a disulfide.

This sequence belongs to the frog skin active peptide (FSAP) family. Esculentin subfamily. Expressed by the skin glands.

The protein resides in the secreted. Shows antibacterial activity against representative Gram-negative and Gram-positive bacterial species, and hemolytic activity. In Pelophylax lessonae (Pool frog), this protein is Esculentin-2B.